The primary structure comprises 266 residues: ATP synthase subunit a (266 aa).

5 consecutive transmembrane segments (helical) span residues 28–48 (SINVDSMFFSIALGILFLVIF), 88–108 (LIAPLALTIFVWVFLMNLMDL), 141–161 (DVNITLSMALGVFILVLFYSI), 206–226 (LFGNMYAGELIFILIAGLLPW), and 237–257 (AIFHILIITLQAFIFMVLTVV).

The protein belongs to the ATPase A chain family. In terms of assembly, F-type ATPases have 2 components, CF(1) - the catalytic core - and CF(0) - the membrane proton channel. CF(1) has five subunits: alpha(3), beta(3), gamma(1), delta(1), epsilon(1). CF(0) has three main subunits: a(1), b(2) and c(9-12). The alpha and beta chains form an alternating ring which encloses part of the gamma chain. CF(1) is attached to CF(0) by a central stalk formed by the gamma and epsilon chains, while a peripheral stalk is formed by the delta and b chains.

It is found in the cell inner membrane. In terms of biological role, key component of the proton channel; it plays a direct role in the translocation of protons across the membrane. The polypeptide is ATP synthase subunit a (Pectobacterium carotovorum subsp. carotovorum (strain PC1)).